We begin with the raw amino-acid sequence, 364 residues long: Histidinol-phosphate aminotransferase (364 aa).

Lys226 is subject to N6-(pyridoxal phosphate)lysine.

This sequence belongs to the class-II pyridoxal-phosphate-dependent aminotransferase family. Histidinol-phosphate aminotransferase subfamily. Homodimer. It depends on pyridoxal 5'-phosphate as a cofactor.

The catalysed reaction is L-histidinol phosphate + 2-oxoglutarate = 3-(imidazol-4-yl)-2-oxopropyl phosphate + L-glutamate. The protein operates within amino-acid biosynthesis; L-histidine biosynthesis; L-histidine from 5-phospho-alpha-D-ribose 1-diphosphate: step 7/9. The chain is Histidinol-phosphate aminotransferase from Campylobacter jejuni subsp. jejuni serotype O:23/36 (strain 81-176).